The primary structure comprises 486 residues: Probable glucan endo-1,3-beta-glucosidase eglC (486 aa).

A signal peptide spans M1–A18. N84 carries N-linked (GlcNAc...) asparagine glycosylation. The active-site Proton donor is E128. N183 is a glycosylation site (N-linked (GlcNAc...) asparagine). The active-site Nucleophile is E239. N-linked (GlcNAc...) asparagine glycans are attached at residues N315, N386, N396, and N404. The segment at A330–T458 is disordered. 2 stretches are compositionally biased toward low complexity: residues G341–N404 and S413–S424. Residues A430–G442 are compositionally biased toward polar residues. Low complexity predominate over residues G445–T458. G463 carries GPI-anchor amidated glycine lipidation. Positions A464–A486 are cleaved as a propeptide — removed in mature form.

It belongs to the glycosyl hydrolase 17 family. In terms of processing, the GPI-anchor is attached to the protein in the endoplasmic reticulum and serves to target the protein to the cell surface. There, the glucosamine-inositol phospholipid moiety is cleaved off and the GPI-modified mannoprotein is covalently attached via its lipidless GPI glycan remnant to the 1,6-beta-glucan of the outer cell wall layer.

It localises to the cell membrane. The protein resides in the secreted. Its subcellular location is the cell wall. The catalysed reaction is Hydrolysis of (1-&gt;3)-beta-D-glucosidic linkages in (1-&gt;3)-beta-D-glucans.. Its function is as follows. Glucanases play a role in cell expansion during growth, in cell-cell fusion during mating, and in spore release during sporulation. This enzyme may be involved in beta-glucan degradation and also function biosynthetically as a transglycosylase. This chain is Probable glucan endo-1,3-beta-glucosidase eglC (eglC), found in Aspergillus terreus (strain NIH 2624 / FGSC A1156).